Reading from the N-terminus, the 295-residue chain is Pyridoxal 5'-phosphate synthase subunit PdxS (295 aa).

A D-ribose 5-phosphate-binding site is contributed by aspartate 23. The active-site Schiff-base intermediate with D-ribose 5-phosphate is the lysine 80. Residue glycine 152 coordinates D-ribose 5-phosphate. A D-glyceraldehyde 3-phosphate-binding site is contributed by arginine 164. Residues glycine 213 and 234–235 (GS) each bind D-ribose 5-phosphate.

The protein belongs to the PdxS/SNZ family. In the presence of PdxT, forms a dodecamer of heterodimers.

It carries out the reaction aldehydo-D-ribose 5-phosphate + D-glyceraldehyde 3-phosphate + L-glutamine = pyridoxal 5'-phosphate + L-glutamate + phosphate + 3 H2O + H(+). It functions in the pathway cofactor biosynthesis; pyridoxal 5'-phosphate biosynthesis. Functionally, catalyzes the formation of pyridoxal 5'-phosphate from ribose 5-phosphate (RBP), glyceraldehyde 3-phosphate (G3P) and ammonia. The ammonia is provided by the PdxT subunit. Can also use ribulose 5-phosphate and dihydroxyacetone phosphate as substrates, resulting from enzyme-catalyzed isomerization of RBP and G3P, respectively. The polypeptide is Pyridoxal 5'-phosphate synthase subunit PdxS (Methanosphaera stadtmanae (strain ATCC 43021 / DSM 3091 / JCM 11832 / MCB-3)).